A 293-amino-acid chain; its full sequence is Probable adenylate kinase 1, chloroplastic (293 aa).

A mitochondrion-targeting transit peptide spans 1-26 (MAAVQRLLRASASGGAAAAAAAARRR). 70 to 75 (GVGKGT) is a binding site for ATP. The tract at residues 90-119 (ATGDLVRDELASSGPLSVQLAEIVNQGKLV) is NMP. AMP contacts are provided by residues T91, R96, 117–119 (KLV), 147–150 (GFPR), and Q154. An LID region spans residues 183-231 (GRRICGQCGKNFNLACIDVKGENGLPPIYMAPLLPPNNCMSKLITRADD). ATP-binding positions include R184 and 193-194 (NF). AMP-binding residues include R228 and R239.

Belongs to the adenylate kinase family.

The protein localises to the mitochondrion. The enzyme catalyses AMP + ATP = 2 ADP. Functionally, catalyzes the reversible transfer of the terminal phosphate group between ATP and AMP. Plays an important role in cellular energy homeostasis and in adenine nucleotide metabolism. The protein is Probable adenylate kinase 1, chloroplastic of Oryza sativa subsp. japonica (Rice).